The sequence spans 156 residues: MSDLDRLASRAAIQDLYSDKLIAVDKRQEGRLASIWWDDAEWTIEGIGTYKGPEGALDLANNVLWPMFHECIHYGTNLRLEFVSADKVNGIGDVLLLGNLVEGNQSILIAAVFTDEYERRDGVWKFSKRNACTNYFTPLAGIHFAPPGIHFAPSGA.

D25 is a catalytic residue. H73 functions as the Proton acceptor in the catalytic mechanism.

The protein belongs to the HCH dehydrochlorinase family. In terms of assembly, homotrimer.

It localises to the periplasm. The enzyme catalyses gamma-hexachlorocyclohexane = (3R,4S,5S,6R)-pentachlorocyclohexene + chloride + H(+). It catalyses the reaction (3R,4S,5S,6R)-pentachlorocyclohexene = (3R,6R)-1,3,4,6-tetrachlorocyclohexa-1,4-diene + chloride + H(+). It functions in the pathway xenobiotic degradation; hexachlorocyclohexane degradation. Catalyzes the conversion of the important environmental pollutant gamma-hexachlorocyclohexane (gamma-HCH or lindane) to 1,3,4,6-tetrachloro-1,4-cyclohexadiene (1,4-TCDN) via gamma-pentachlorocyclohexene (gamma-PCCH). Proceeds by two successive 1,2-anti conformationally dependent dehydrochlorinations. Also shows activity with alpha- and delta-HCH, giving alpha- and delta-PCCH respectively, but not with the beta isomer. The protein is Hexachlorocyclohexane dehydrochlorinase 2 of Sphingobium indicum (strain DSM 16412 / CCM 7286 / MTCC 6364 / B90A).